A 262-amino-acid polypeptide reads, in one-letter code: Nodulation protein J (262 aa).

Residues 33-259 form the ABC transmembrane type-2 domain; that stretch reads ASILGNLAEP…FLSVGLLQRR (227 aa). The next 6 helical transmembrane spans lie at 35–55, 62–82, 125–145, 147–167, 177–197, and 236–256; these read ILGNLAEPVTSLFGLGFGLGA, GIPYVAFLAAGMVATSAMISA, ALLAGTAMMLVAATMGFASWP, VLFALPVIALTGFAFASLAMI, YFIFYQTLFLTPMLFLSGAVF, and LHISALCIFAVMPFFLSVGLL.

This sequence belongs to the ABC-2 integral membrane protein family. Lipooligosaccharide exporter (TC 3.A.1.102) subfamily. As to quaternary structure, the complex is composed of two ATP-binding proteins (NodI) and two transmembrane proteins (NodJ).

It is found in the cell inner membrane. Part of the ABC transporter complex NodIJ involved in the export of the nodulation factors (Nod factors), the bacterial signal molecules that induce symbiosis and subsequent nodulation induction. Nod factors are LCO (lipo-chitin oligosaccharide), a modified beta-1,4-linked N-acetylglucosamine oligosaccharide. This subunit encodes the transporter. This is Nodulation protein J (nodJ) from Sinorhizobium fredii (strain NBRC 101917 / NGR234).